The chain runs to 158 residues: Inner membrane assembly complex subunit 17 (158 aa).

The transit peptide at 1 to 15 (MFRPLVKRVVTRRFL) directs the protein to the mitochondrion. Residues 16–85 (AAANNSNAHI…KTQETSLKKF (70 aa)) are Mitochondrial matrix-facing. Residues 86-108 (VRPAWIFLLMGSIVYLSCHYVWW) traverse the membrane as a helical segment. Residues 109–158 (KLDYEEKELEYTHKVHQLESELAALNEAHNSSVSSDKNSKRSSRKWYKFW) lie on the Mitochondrial intermembrane side of the membrane. Residues 110–140 (LDYEEKELEYTHKVHQLESELAALNEAHNSS) adopt a coiled-coil conformation.

This sequence belongs to the INA17 family. Component of the inner membrane assembly (INA) complex, composed of INA17 and INA22. Interacts with a subset of F(1)F(0)-ATP synthase subunits of the F(1)-domain and the peripheral stalk.

Its subcellular location is the mitochondrion inner membrane. In terms of biological role, component of the INA complex (INAC) that promotes the biogenesis of mitochondrial F(1)F(0)-ATP synthase. INAC facilitates the assembly of the peripheral stalk and promotes the assembly of the catalytic F(1)-domain with the membrane-embedded F(0)-domain. This is Inner membrane assembly complex subunit 17 from Kluyveromyces lactis (strain ATCC 8585 / CBS 2359 / DSM 70799 / NBRC 1267 / NRRL Y-1140 / WM37) (Yeast).